The following is a 364-amino-acid chain: Chaperone protein DnaJ (364 aa).

The 66-residue stretch at 4-69 (DYYEILGLSK…NKKAKYDRFG (66 aa)) folds into the J domain. The segment at 135-213 (GYKNNINITR…CKGKGSLTKQ (79 aa)) adopts a CR-type zinc-finger fold. C148, C151, C165, C168, C187, C190, C201, and C204 together coordinate Zn(2+). CXXCXGXG motif repeat units follow at residues 148 to 155 (CDSCLGKK), 165 to 172 (CNMCNGSG), 187 to 194 (CSKCYGEG), and 201 to 208 (CKSCKGKG).

The protein belongs to the DnaJ family. As to quaternary structure, homodimer. The cofactor is Zn(2+).

It is found in the cytoplasm. Its function is as follows. Participates actively in the response to hyperosmotic and heat shock by preventing the aggregation of stress-denatured proteins and by disaggregating proteins, also in an autonomous, DnaK-independent fashion. Unfolded proteins bind initially to DnaJ; upon interaction with the DnaJ-bound protein, DnaK hydrolyzes its bound ATP, resulting in the formation of a stable complex. GrpE releases ADP from DnaK; ATP binding to DnaK triggers the release of the substrate protein, thus completing the reaction cycle. Several rounds of ATP-dependent interactions between DnaJ, DnaK and GrpE are required for fully efficient folding. Also involved, together with DnaK and GrpE, in the DNA replication of plasmids through activation of initiation proteins. The protein is Chaperone protein DnaJ of Borreliella burgdorferi (strain ATCC 35210 / DSM 4680 / CIP 102532 / B31) (Borrelia burgdorferi).